Consider the following 1156-residue polypeptide: ATP-dependent RNA helicase glh-4 (1156 aa).

Disordered regions lie at residues 1–81, 194–213, 231–423, and 436–522; these read MSFS…GAPS, TGVG…GQQP, SSSG…DSST, and HRAS…SGLG. Residues 12-22 show a composition bias toward basic and acidic residues; the sequence is AEVKVAEDVPE. Residues 24-34 are compositionally biased toward pro residues; the sequence is NVPPPVEPPRA. 3 stretches are compositionally biased toward polar residues: residues 60–73, 194–211, and 243–258; these read ITTS…TTPK, TGVG…SFGQ, and TESS…TSQP. Residues 259–281 are compositionally biased toward gly residues; it reads GFGGDSSTGFGSGLKAGFGGHGA. Residues 307-319 show a composition bias toward polar residues; the sequence is ASSSNESAFGQQS. 2 stretches are compositionally biased toward gly residues: residues 321 to 332 and 342 to 358; these read GFGGATKNGFGG and SKAG…GGQK. Polar residues-rich tracts occupy residues 362–371 and 395–406; these read TESSGFPTKE and PSTTDSSSGQQT. Gly residues predominate over residues 408-423; that stretch reads GFGGASKPGFGGDSST. 2 stretches are compositionally biased toward polar residues: residues 440–451 and 464–476; these read TAENSGLPTETT and ASSS…GQQS. Over residues 478-489 the composition is skewed to gly residues; the sequence is GFGGATKNGFGG. CCHC-type zinc fingers lie at residues 570–587, 593–610, 616–633, 639–656, and 665–682; these read RGCH…ECDK, FPCR…DCDQ, GPCR…DCDQ, GPCR…DCQN, and EPCR…ECPT. The Q motif signature appears at 736-764; it reads SFDGFKILPQDLHDNLKRMKMNRPTPIQR. The region spanning 767-951 is the Helicase ATP-binding domain; it reads FFPIMHGNDV…LPKFVKEGYT (185 aa). Residue 780–787 coordinates ATP; that stretch reads AHTGSGKT. Positions 897-900 match the DEAD box motif; that stretch reads DEAD. The region spanning 986–1139 is the Helicase C-terminal domain; sequence GIDENTVTLL…EVPEWLTEGA (154 aa). The interval 1135–1156 is disordered; it reads LTEGAGHQEEGGDDWNEQEQEW. Residues 1145–1156 show a composition bias toward acidic residues; that stretch reads GGDDWNEQEQEW.

This sequence belongs to the DEAD box helicase family. DDX4/VASA subfamily. In terms of assembly, interacts (via C-terminus) with kgb-1.

The catalysed reaction is ATP + H2O = ADP + phosphate + H(+). Probable ATP-binding RNA helicase. May act redundantly with the P-granule component glh-1 to regulate the formation of the granular structure of P-granules in embryos. May protect somatic cells from excessive apoptosis during normal development. The polypeptide is ATP-dependent RNA helicase glh-4 (Caenorhabditis elegans).